Consider the following 143-residue polypeptide: FAD synthase (143 aa).

ATP contacts are provided by residues 10–11 (TF), 15–18 (HPGH), and Asp93.

Belongs to the archaeal FAD synthase family. In terms of assembly, homodimer. The cofactor is a divalent metal cation.

It carries out the reaction FMN + ATP + H(+) = FAD + diphosphate. It participates in cofactor biosynthesis; FAD biosynthesis; FAD from FMN: step 1/1. Catalyzes the transfer of the AMP portion of ATP to flavin mononucleotide (FMN) to produce flavin adenine dinucleotide (FAD) coenzyme. The chain is FAD synthase from Haloterrigena turkmenica (strain ATCC 51198 / DSM 5511 / JCM 9101 / NCIMB 13204 / VKM B-1734 / 4k) (Halococcus turkmenicus).